A 908-amino-acid chain; its full sequence is DNA mismatch repair protein MutS (908 aa).

629–636 contacts ATP; the sequence is GPNMAGKS. A disordered region spans residues 822–863; that stretch reads ADEADGAPSEDPPSEDPPSGDGVRAKKGEADAVPDLEDSQAN.

This sequence belongs to the DNA mismatch repair MutS family.

In terms of biological role, this protein is involved in the repair of mismatches in DNA. It is possible that it carries out the mismatch recognition step. This protein has a weak ATPase activity. This Salinibacter ruber (strain DSM 13855 / M31) protein is DNA mismatch repair protein MutS.